The following is a 549-amino-acid chain: MSMFCYQCQETAGCKGCTSRGVCGKTSDVANLQDLLIYVVKGISIYDLKAEEAGIKNNEVNKFIMDALFSTITNANFSREDFIARIKDAIGLRDSIKDELVKNNVQIDDIKDDCALWKGISVEEFEAKAATVGILATENEDVRSLRELLTYGIKGMAAYAHHAYNLGYENEEIYTFMKKALVSTRNALSVDEMIGIVLECGKFGVDVMALLDKANTETYGNPEITKVNIGVRNNPAILISGHDLKDMEELLKQTEGTGVDVYTHSEMLAANYYPEFKKYDHFVGNYGNAWWKQNEEFKSFNGPILMTTNCLVPPKESYKDRVYTTGAVAFEGLKHIEDRKDGKAKDFSEIIEHAKRCASPMEIEKGEIVGGFAHNAVLSLADKIVDAVKTGAIRRFFVMAGCDGRAKSRNYYSDFAKALPKDTVILTAGCAKYKYNKLDLGDIGGIPRVLDAGQCNDSYSLAVIALKLKEVFELQDINELPISFNISWYEQKAVIVLLALLHLGVKNIHLGPTLPAFLSPNVAKVLVENFGIAGIGTVEDDIKLFLGEA.

Residues Cys5, Cys8, Cys17, and Cys23 each contribute to the [4Fe-4S] cluster site. Hybrid [4Fe-2O-2S] cluster-binding residues include His242, Glu266, Cys310, Cys402, Cys430, Cys455, Glu490, and Lys492. The residue at position 402 (Cys402) is a Cysteine persulfide.

Belongs to the HCP family. [4Fe-4S] cluster serves as cofactor. It depends on hybrid [4Fe-2O-2S] cluster as a cofactor.

Its subcellular location is the cytoplasm. The enzyme catalyses A + NH4(+) + H2O = hydroxylamine + AH2 + H(+). In terms of biological role, catalyzes the reduction of hydroxylamine to form NH(3) and H(2)O. This is Hydroxylamine reductase from Clostridium novyi (strain NT).